A 542-amino-acid polypeptide reads, in one-letter code: CTP synthase (542 aa).

The interval 1-265 (MTRYVFITGG…DREILAHFQM (265 aa)) is amidoligase domain. Residue serine 13 coordinates CTP. Residue serine 13 coordinates UTP. Residues 14–19 (SLGKGL) and aspartate 71 each bind ATP. Mg(2+)-binding residues include aspartate 71 and glutamate 139. CTP contacts are provided by residues 146 to 148 (DIE), 186 to 191 (KTKPTQ), and lysine 222. Residues 186-191 (KTKPTQ) and lysine 222 each bind UTP. 238 to 240 (RDV) lines the ATP pocket. One can recognise a Glutamine amidotransferase type-1 domain in the interval 291–541 (TIAIVGKYTG…IAAAIDQSRL (251 aa)). Glycine 353 is a binding site for L-glutamine. Cysteine 380 acts as the Nucleophile; for glutamine hydrolysis in catalysis. L-glutamine contacts are provided by residues 381 to 384 (FGMQ), glutamate 404, and arginine 469. Catalysis depends on residues histidine 514 and glutamate 516.

Belongs to the CTP synthase family. Homotetramer.

The enzyme catalyses UTP + L-glutamine + ATP + H2O = CTP + L-glutamate + ADP + phosphate + 2 H(+). It catalyses the reaction L-glutamine + H2O = L-glutamate + NH4(+). The catalysed reaction is UTP + NH4(+) + ATP = CTP + ADP + phosphate + 2 H(+). Its pathway is pyrimidine metabolism; CTP biosynthesis via de novo pathway; CTP from UDP: step 2/2. Its activity is regulated as follows. Allosterically activated by GTP, when glutamine is the substrate; GTP has no effect on the reaction when ammonia is the substrate. The allosteric effector GTP functions by stabilizing the protein conformation that binds the tetrahedral intermediate(s) formed during glutamine hydrolysis. Inhibited by the product CTP, via allosteric rather than competitive inhibition. In terms of biological role, catalyzes the ATP-dependent amination of UTP to CTP with either L-glutamine or ammonia as the source of nitrogen. Regulates intracellular CTP levels through interactions with the four ribonucleotide triphosphates. The sequence is that of CTP synthase from Methylorubrum extorquens (strain CM4 / NCIMB 13688) (Methylobacterium extorquens).